We begin with the raw amino-acid sequence, 639 residues long: MNGNNNMNNNGKSNNKKKNKNWILGLVVVFLISAIFMSYFIRGGESYKNVPYSTFQSYLDNGLVESVVIIDKNLIQFVVKGSNFAKSYFSTSIPYLDINLLSELKNKKVELSSGKSQASLIGVLLQTLPWILFFIFFFFIFRQTQGGGGKVFTFGKSNAQKYEAGKNKITFKDVAGQEEVKQELREVVEFLKNPKKFEKIGAKIPKGVLLVGSPGTGKTLLAKAVAGEAGVSFFHMSGSDFVEMFVGVGASRVRDLFDNARKNSPCIIFIDELDAVGRSRGAGLGGGHDEREQTLNQLLVEMDGFGTHTNVIVMAATNRPDVLDSALLRPGRFDRQVTVSLPDIKEREAILNIHSLKTKLSKDINLQVIARATPGASGADLANLINEGALIAARNNQDEILMKDMEEARDKILMGVAKKSMTITDRQKLETAYHEAGHALLHYYLEHADPLHKVTIIPRGRALGVAFSLPREDRLSINKHQILDKIKICYGGYASEQINLGVTTAGVQNDLMQATSLAKKMVTEWGMGEEVGPIFLVDDEAPIFLPKEFSKAKAYSENTADKVDREVKRILEECLKEASDILLKHKDQLVKLAKELVLKETLTDKEVRELLGFEANKDEYDLFSSDSTTKEVKGEDVKG.

Residues 1–20 (MNGNNNMNNNGKSNNKKKNK) lie on the Cytoplasmic side of the membrane. Residues 21-41 (NWILGLVVVFLISAIFMSYFI) form a helical membrane-spanning segment. Residues 42-120 (RGGESYKNVP…LSSGKSQASL (79 aa)) are Periplasmic-facing. A helical membrane pass occupies residues 121–141 (IGVLLQTLPWILFFIFFFFIF). The Cytoplasmic segment spans residues 142-639 (RQTQGGGGKV…KEVKGEDVKG (498 aa)). ATP is bound at residue 212 to 219 (GSPGTGKT). His434 lines the Zn(2+) pocket. Glu435 is an active-site residue. His438 and Asp510 together coordinate Zn(2+).

It in the central section; belongs to the AAA ATPase family. This sequence in the C-terminal section; belongs to the peptidase M41 family. As to quaternary structure, homohexamer. Requires Zn(2+) as cofactor.

It localises to the cell inner membrane. In terms of biological role, acts as a processive, ATP-dependent zinc metallopeptidase for both cytoplasmic and membrane proteins. Plays a role in the quality control of integral membrane proteins. The chain is ATP-dependent zinc metalloprotease FtsH from Borreliella burgdorferi (strain ZS7) (Borrelia burgdorferi).